Reading from the N-terminus, the 545-residue chain is CTP synthase (545 aa).

Positions 2–266 (TTNYIFVTGG…DDYICKRFSL (265 aa)) are amidoligase domain. Serine 14 serves as a coordination point for CTP. Serine 14 serves as a coordination point for UTP. Residues 15 to 20 (SLGKGI) and aspartate 72 contribute to the ATP site. Mg(2+) is bound by residues aspartate 72 and glutamate 140. CTP contacts are provided by residues 147 to 149 (DIE), 187 to 192 (KTKPTQ), and lysine 223. Residues 187-192 (KTKPTQ) and lysine 223 contribute to the UTP site. 239–241 (KDV) contacts ATP. The Glutamine amidotransferase type-1 domain occupies 291–542 (TIGMVGKYIE…VKAANEHQKR (252 aa)). Glycine 352 lines the L-glutamine pocket. Residue cysteine 379 is the Nucleophile; for glutamine hydrolysis of the active site. L-glutamine-binding positions include 380–383 (LGMQ), glutamate 403, and arginine 470. Active-site residues include histidine 515 and glutamate 517.

Belongs to the CTP synthase family. As to quaternary structure, homotetramer.

It catalyses the reaction UTP + L-glutamine + ATP + H2O = CTP + L-glutamate + ADP + phosphate + 2 H(+). The catalysed reaction is L-glutamine + H2O = L-glutamate + NH4(+). It carries out the reaction UTP + NH4(+) + ATP = CTP + ADP + phosphate + 2 H(+). The protein operates within pyrimidine metabolism; CTP biosynthesis via de novo pathway; CTP from UDP: step 2/2. Its activity is regulated as follows. Allosterically activated by GTP, when glutamine is the substrate; GTP has no effect on the reaction when ammonia is the substrate. The allosteric effector GTP functions by stabilizing the protein conformation that binds the tetrahedral intermediate(s) formed during glutamine hydrolysis. Inhibited by the product CTP, via allosteric rather than competitive inhibition. Functionally, catalyzes the ATP-dependent amination of UTP to CTP with either L-glutamine or ammonia as the source of nitrogen. Regulates intracellular CTP levels through interactions with the four ribonucleotide triphosphates. The protein is CTP synthase of Salmonella typhi.